Reading from the N-terminus, the 510-residue chain is Light-independent protochlorophyllide reductase subunit B (510 aa).

Position 36 (aspartate 36) interacts with [4Fe-4S] cluster. Catalysis depends on aspartate 296, which acts as the Proton donor. 431 to 432 lines the substrate pocket; the sequence is GM.

It belongs to the ChlB/BchB/BchZ family. Protochlorophyllide reductase is composed of three subunits; ChlL, ChlN and ChlB. Forms a heterotetramer of two ChlB and two ChlN subunits. [4Fe-4S] cluster is required as a cofactor.

Its subcellular location is the plastid. It localises to the chloroplast. The enzyme catalyses chlorophyllide a + oxidized 2[4Fe-4S]-[ferredoxin] + 2 ADP + 2 phosphate = protochlorophyllide a + reduced 2[4Fe-4S]-[ferredoxin] + 2 ATP + 2 H2O. Its pathway is porphyrin-containing compound metabolism; chlorophyll biosynthesis (light-independent). Component of the dark-operative protochlorophyllide reductase (DPOR) that uses Mg-ATP and reduced ferredoxin to reduce ring D of protochlorophyllide (Pchlide) to form chlorophyllide a (Chlide). This reaction is light-independent. The NB-protein (ChlN-ChlB) is the catalytic component of the complex. The chain is Light-independent protochlorophyllide reductase subunit B from Angiopteris evecta (Mule's foot fern).